The following is a 304-amino-acid chain: Recombination-associated protein RdgC (304 aa).

The protein belongs to the RdgC family.

The protein localises to the cytoplasm. It is found in the nucleoid. May be involved in recombination. This Shewanella baltica (strain OS223) protein is Recombination-associated protein RdgC.